Reading from the N-terminus, the 371-residue chain is 4-hydroxy-3-methylbut-2-en-1-yl diphosphate synthase (flavodoxin) (371 aa).

Positions 270, 273, 305, and 312 each coordinate [4Fe-4S] cluster.

The protein belongs to the IspG family. Requires [4Fe-4S] cluster as cofactor.

It carries out the reaction (2E)-4-hydroxy-3-methylbut-2-enyl diphosphate + oxidized [flavodoxin] + H2O + 2 H(+) = 2-C-methyl-D-erythritol 2,4-cyclic diphosphate + reduced [flavodoxin]. Its pathway is isoprenoid biosynthesis; isopentenyl diphosphate biosynthesis via DXP pathway; isopentenyl diphosphate from 1-deoxy-D-xylulose 5-phosphate: step 5/6. Converts 2C-methyl-D-erythritol 2,4-cyclodiphosphate (ME-2,4cPP) into 1-hydroxy-2-methyl-2-(E)-butenyl 4-diphosphate. The chain is 4-hydroxy-3-methylbut-2-en-1-yl diphosphate synthase (flavodoxin) from Shewanella frigidimarina (strain NCIMB 400).